We begin with the raw amino-acid sequence, 149 residues long: Large ribosomal subunit protein bL9 (149 aa).

The protein belongs to the bacterial ribosomal protein bL9 family.

In terms of biological role, binds to the 23S rRNA. The chain is Large ribosomal subunit protein bL9 from Magnetococcus marinus (strain ATCC BAA-1437 / JCM 17883 / MC-1).